Here is a 216-residue protein sequence, read N- to C-terminus: Adenylate kinase (216 aa).

10–15 (GAGKGT) is an ATP binding site. Residues 30–59 (STGDMIRETIKSDSEIGKELKKVLDAGQLV) form an NMP region. Residues Thr31, Arg36, 57–59 (QLV), and Gln92 each bind AMP. The LID stretch occupies residues 122–159 (GRRVHPASGRTYHTKFNPPKVEGKDDITGEDLITRTDD). ATP is bound by residues Arg123 and 132 to 133 (TY). AMP contacts are provided by Arg156 and Arg167. Residue Gln202 coordinates ATP.

It belongs to the adenylate kinase family. Monomer.

It localises to the cytoplasm. The enzyme catalyses AMP + ATP = 2 ADP. It functions in the pathway purine metabolism; AMP biosynthesis via salvage pathway; AMP from ADP: step 1/1. Functionally, catalyzes the reversible transfer of the terminal phosphate group between ATP and AMP. Plays an important role in cellular energy homeostasis and in adenine nucleotide metabolism. The sequence is that of Adenylate kinase from Francisella philomiragia subsp. philomiragia (strain ATCC 25017 / CCUG 19701 / FSC 153 / O#319-036).